The chain runs to 528 residues: Lysine--tRNA ligase (528 aa).

Positions 44–52 match the 'HIGH' region motif; the sequence is PSGLPHIGT. Residues 290–294 carry the 'KMSKS' region motif; it reads KISKS. Lys293 is a binding site for ATP.

It belongs to the class-I aminoacyl-tRNA synthetase family.

Its subcellular location is the cytoplasm. The catalysed reaction is tRNA(Lys) + L-lysine + ATP = L-lysyl-tRNA(Lys) + AMP + diphosphate. This is Lysine--tRNA ligase (lysS) from Rickettsia prowazekii (strain Madrid E).